The chain runs to 192 residues: Xanthine phosphoribosyltransferase (192 aa).

Xanthine contacts are provided by L20 and N27. Residue 128–132 (AHGEA) coordinates 5-phospho-alpha-D-ribose 1-diphosphate. K156 is a binding site for xanthine.

Belongs to the purine/pyrimidine phosphoribosyltransferase family. Xpt subfamily. In terms of assembly, homodimer.

It is found in the cytoplasm. It catalyses the reaction XMP + diphosphate = xanthine + 5-phospho-alpha-D-ribose 1-diphosphate. Its pathway is purine metabolism; XMP biosynthesis via salvage pathway; XMP from xanthine: step 1/1. Its function is as follows. Converts the preformed base xanthine, a product of nucleic acid breakdown, to xanthosine 5'-monophosphate (XMP), so it can be reused for RNA or DNA synthesis. This Lactobacillus gasseri (strain ATCC 33323 / DSM 20243 / BCRC 14619 / CIP 102991 / JCM 1131 / KCTC 3163 / NCIMB 11718 / NCTC 13722 / AM63) protein is Xanthine phosphoribosyltransferase.